Reading from the N-terminus, the 400-residue chain is Cytohesin-3 (400 aa).

Positions 14 to 61 (EDLSLEEREELLDIRRRKKELIDDIERLKYEIAEVMTEIDNLTSVEES) form a coiled coil. Residues 77–206 (FNMDPKKGIQ…IIMLNTSLHN (130 aa)) enclose the SEC7 domain. The region spanning 264-381 (NPDREGWLLK…WMKSIKASIS (118 aa)) is the PH domain. A 1,2-diacyl-sn-glycero-3-phospho-(1D-myo-inositol-3,4,5-trisphosphate)-binding positions include 273–281 (KLGGGRVKT), R285, Y296, R306, and N355. The C-terminal autoinhibitory region stretch occupies residues 392–400 (RKRRIANKK).

Interacts with TAMALIN. Interacts with ARF6. Interacts with FRMD4A. Interacts with FRMD4B. In terms of tissue distribution, almost absent from liver, thymus and peripheral blood lymphocytes.

Its subcellular location is the cytoplasm. The protein localises to the cytosol. It localises to the cell membrane. The protein resides in the cell junction. It is found in the adherens junction. Its subcellular location is the tight junction. In terms of biological role, promotes guanine-nucleotide exchange on ARF1 and ARF6. Promotes the activation of ARF factors through replacement of GDP with GTP. Plays a role in the epithelial polarization. The polypeptide is Cytohesin-3 (Homo sapiens (Human)).